Reading from the N-terminus, the 547-residue chain is ATP synthase subunit alpha (547 aa).

172-179 lines the ATP pocket; that stretch reads GDRKTGKT.

This sequence belongs to the ATPase alpha/beta chains family. F-type ATPases have 2 components, CF(1) - the catalytic core - and CF(0) - the membrane proton channel. CF(1) has five subunits: alpha(3), beta(3), gamma(1), delta(1), epsilon(1). CF(0) has three main subunits: a(1), b(2) and c(9-12). The alpha and beta chains form an alternating ring which encloses part of the gamma chain. CF(1) is attached to CF(0) by a central stalk formed by the gamma and epsilon chains, while a peripheral stalk is formed by the delta and b chains.

The protein localises to the cell membrane. It carries out the reaction ATP + H2O + 4 H(+)(in) = ADP + phosphate + 5 H(+)(out). Its function is as follows. Produces ATP from ADP in the presence of a proton gradient across the membrane. The alpha chain is a regulatory subunit. The polypeptide is ATP synthase subunit alpha (Corynebacterium glutamicum (strain R)).